Reading from the N-terminus, the 467-residue chain is Constitutive acid phosphatase (467 aa).

Residues 1–17 (MFKSVVYSVLAAALVNA) form the signal peptide. H75 functions as the Nucleophile in the catalytic mechanism. 6 N-linked (GlcNAc...) asparagine glycosylation sites follow: N97, N103, N162, N192, N250, and N315. D338 acts as the Proton donor in catalysis. N-linked (GlcNAc...) asparagine glycosylation is found at N356, N390, N439, N445, N456, and N461.

The protein belongs to the histidine acid phosphatase family.

It catalyses the reaction a phosphate monoester + H2O = an alcohol + phosphate. The protein is Constitutive acid phosphatase (PHO3) of Saccharomyces cerevisiae (strain ATCC 204508 / S288c) (Baker's yeast).